The primary structure comprises 91 residues: CRISPR-associated endoribonuclease Cas2 2 (91 aa).

Residue D8 coordinates Mg(2+).

Belongs to the CRISPR-associated endoribonuclease Cas2 protein family. Homodimer, forms a heterotetramer with a Cas1 homodimer. The cofactor is Mg(2+).

CRISPR (clustered regularly interspaced short palindromic repeat), is an adaptive immune system that provides protection against mobile genetic elements (viruses, transposable elements and conjugative plasmids). CRISPR clusters contain sequences complementary to antecedent mobile elements and target invading nucleic acids. CRISPR clusters are transcribed and processed into CRISPR RNA (crRNA). Functions as a ssRNA-specific endoribonuclease. Involved in the integration of spacer DNA into the CRISPR cassette. The protein is CRISPR-associated endoribonuclease Cas2 2 of Pyrobaculum aerophilum (strain ATCC 51768 / DSM 7523 / JCM 9630 / CIP 104966 / NBRC 100827 / IM2).